The following is a 93-amino-acid chain: Small ribosomal subunit protein bS20 (93 aa).

Positions 1–11 are enriched in basic and acidic residues; it reads MPQHKSAEKRV. The disordered stretch occupies residues 1-23; the sequence is MPQHKSAEKRVRQSKRRNARNRV. The segment covering 12–23 has biased composition (basic residues); it reads RQSKRRNARNRV.

Belongs to the bacterial ribosomal protein bS20 family.

Binds directly to 16S ribosomal RNA. The protein is Small ribosomal subunit protein bS20 of Chloroherpeton thalassium (strain ATCC 35110 / GB-78).